We begin with the raw amino-acid sequence, 332 residues long: Terpene synthase 1 (332 aa).

The DDxx(x)D/E motif signature appears at 81 to 86 (DDGLDA). Positions 221–229 (NDLVSYEKE) match the NDxxSxxxD/E motif motif.

This sequence belongs to the terpene synthase family.

It carries out the reaction (2E,6E)-farnesyl diphosphate = (2S,3R,6S,9S)-(-)-protoillud-7-ene + diphosphate. Its function is as follows. Terpene synthase that converts its substrate farnesyl diphosphate (FPP) into the sesquiterpene protoillud-7-ene. This chain is Terpene synthase 1, found in Acytostelium subglobosum (Slime mold).